The primary structure comprises 884 residues: Alanine--tRNA ligase (884 aa).

Zn(2+) contacts are provided by His562, His566, Cys676, and His680.

The protein belongs to the class-II aminoacyl-tRNA synthetase family. Zn(2+) serves as cofactor.

It localises to the cytoplasm. It catalyses the reaction tRNA(Ala) + L-alanine + ATP = L-alanyl-tRNA(Ala) + AMP + diphosphate. In terms of biological role, catalyzes the attachment of alanine to tRNA(Ala) in a two-step reaction: alanine is first activated by ATP to form Ala-AMP and then transferred to the acceptor end of tRNA(Ala). Also edits incorrectly charged Ser-tRNA(Ala) and Gly-tRNA(Ala) via its editing domain. The sequence is that of Alanine--tRNA ligase from Jannaschia sp. (strain CCS1).